The primary structure comprises 146 residues: Phospholipase A2, membrane associated (146 aa).

Residues 1-21 (MKVLLLLAVVIMAFGSIQVQG) form the signal peptide. 7 disulfide bridges follow: Cys-47-Cys-139, Cys-49-Cys-65, Cys-64-Cys-119, Cys-70-Cys-146, Cys-71-Cys-112, Cys-80-Cys-105, and Cys-98-Cys-110. Residues His-48, Gly-50, and Gly-52 each coordinate Ca(2+). His-68 is an active-site residue. Asp-69 contacts Ca(2+). Asp-113 is a catalytic residue.

The protein belongs to the phospholipase A2 family. The cofactor is Ca(2+).

It is found in the secreted. The protein localises to the cell membrane. The protein resides in the mitochondrion outer membrane. It catalyses the reaction a 1,2-diacyl-sn-glycero-3-phosphoethanolamine + H2O = a 1-acyl-sn-glycero-3-phosphoethanolamine + a fatty acid + H(+). It carries out the reaction 1-hexadecanoyl-2-(9Z-octadecenoyl)-sn-glycero-3-phosphoethanolamine + H2O = 1-hexadecanoyl-sn-glycero-3-phosphoethanolamine + (9Z)-octadecenoate + H(+). The enzyme catalyses 1-hexadecanoyl-2-(9Z,12Z-octadecadienoyl)-sn-glycero-3-phosphoethanolamine + H2O = 1-hexadecanoyl-sn-glycero-3-phosphoethanolamine + (9Z,12Z)-octadecadienoate + H(+). The catalysed reaction is 1-hexadecanoyl-2-(5Z,8Z,11Z,14Z-eicosatetraenoyl)-sn-glycero-3-phosphoethanolamine + H2O = 1-hexadecanoyl-sn-glycero-3-phosphoethanolamine + (5Z,8Z,11Z,14Z)-eicosatetraenoate + H(+). It catalyses the reaction N-hexadecanoyl-1,2-di-(9Z-octadecenoyl)-sn-glycero-3-phosphoethanolamine + H2O = N-hexadecanoyl-1-(9Z-octadecenoyl)-sn-glycero-3-phosphoethanolamine + (9Z)-octadecenoate + H(+). It carries out the reaction 1,2-dihexadecanoyl-sn-glycero-3-phospho-(1'-sn-glycerol) + H2O = 1-hexadecanoyl-sn-glycero-3-phospho-(1'-sn-glycerol) + hexadecanoate + H(+). The enzyme catalyses 1-hexadecanoyl-2-(9Z-octadecenoyl)-sn-glycero-3-phosphoglycerol + H2O = 1-hexadecanoyl-sn-glycero-3-phosphoglycerol + (9Z)-octadecenoate + H(+). The catalysed reaction is 1-hexadecanoyl-2-(9Z-octadecenoyl)-sn-glycero-3-phospho-(1'-sn-glycerol) + H2O = 1-hexadecanoyl-sn-glycero-3-phospho-(1'-sn-glycerol) + (9Z)-octadecenoate + H(+). It catalyses the reaction a 1,2-diacyl-sn-glycero-3-phosphocholine + H2O = a 1-acyl-sn-glycero-3-phosphocholine + a fatty acid + H(+). It carries out the reaction 1,2-dihexadecanoyl-sn-glycero-3-phosphocholine + H2O = 1-hexadecanoyl-sn-glycero-3-phosphocholine + hexadecanoate + H(+). The enzyme catalyses 1-hexadecanoyl-2-(9Z-octadecenoyl)-sn-glycero-3-phosphocholine + H2O = 1-hexadecanoyl-sn-glycero-3-phosphocholine + (9Z)-octadecenoate + H(+). The catalysed reaction is 1-hexadecanoyl-2-(9Z,12Z-octadecadienoyl)-sn-glycero-3-phosphocholine + H2O = (9Z,12Z)-octadecadienoate + 1-hexadecanoyl-sn-glycero-3-phosphocholine + H(+). It catalyses the reaction 1-hexadecanoyl-2-(4Z,7Z,10Z,13Z,16Z,19Z-docosahexaenoyl)-sn-glycero-3-phosphocholine + H2O = (4Z,7Z,10Z,13Z,16Z,19Z)-docosahexaenoate + 1-hexadecanoyl-sn-glycero-3-phosphocholine + H(+). In terms of biological role, secretory calcium-dependent phospholipase A2 that primarily targets extracellular phospholipids with implications in host antimicrobial defense, inflammatory response and tissue regeneration. Hydrolyzes the ester bond of the fatty acyl group attached at sn-2 position of phospholipids (phospholipase A2 activity) with preference for phosphatidylethanolamines and phosphatidylglycerols over phosphatidylcholines. Contributes to lipid remodeling of cellular membranes and generation of lipid mediators involved in pathogen clearance. Displays bactericidal activity against Gram-positive bacteria by directly hydrolyzing phospholipids of the bacterial membrane. Upon sterile inflammation, targets membrane phospholipids of extracellular mitochondria released from activated platelets, generating free unsaturated fatty acids such as arachidonate that is used by neighboring leukocytes to synthesize inflammatory eicosanoids such as leukotrienes. Simultaneously, by compromising mitochondrial membrane integrity, promotes the release in circulation of potent damage-associated molecular pattern molecules that activate the innate immune response. Plays a stem cell regulator role in the intestinal crypt. Within intracellular compartment mediates Paneth cell differentiation and its stem cell supporting functions by inhibiting Wnt signaling pathway in intestinal stem cell (ICS). Secreted in the intestinal lumen upon inflammation, acts in an autocrine way and promotes prostaglandin E2 synthesis that stimulates Wnt signaling pathway in ICS cells and tissue regeneration. May play a role in the biosynthesis of N-acyl ethanolamines that regulate energy metabolism and inflammation. Hydrolyzes N-acyl phosphatidylethanolamines to N-acyl lysophosphatidylethanolamines, which are further cleaved by a lysophospholipase D to release N-acyl ethanolamines. Independent of its catalytic activity, acts as a ligand for integrins. Binds to and activates integrins ITGAV:ITGB3, ITGA4:ITGB1 and ITGA5:ITGB1. Binds to a site (site 2) which is distinct from the classical ligand-binding site (site 1) and induces integrin conformational changes and enhanced ligand binding to site 1. Induces cell proliferation in an integrin-dependent manner. This Rattus norvegicus (Rat) protein is Phospholipase A2, membrane associated (Pla2g2a).